Reading from the N-terminus, the 227-residue chain is Cytochrome c oxidase subunit 2 (227 aa).

Residues 1-14 are Mitochondrial intermembrane-facing; that stretch reads MAHAAQVGLQDATS. Residues 15–45 form a helical membrane-spanning segment; sequence PIMEELITFHDHALMIIFLICFLVLYALFLT. Residues 46–59 lie on the Mitochondrial matrix side of the membrane; the sequence is LTTKLTNTNISDAQ. The chain crosses the membrane as a helical span at residues 60-87; the sequence is EMETVWTILPAIILVLIALPSLRILYMT. Topologically, residues 88-227 are mitochondrial intermembrane; the sequence is DEVNDPSLTI…IFEMGPVFTL (140 aa). The Cu cation site is built by His-161, Cys-196, Glu-198, Cys-200, His-204, and Met-207. Glu-198 serves as a coordination point for Mg(2+).

The protein belongs to the cytochrome c oxidase subunit 2 family. In terms of assembly, component of the cytochrome c oxidase (complex IV, CIV), a multisubunit enzyme composed of 14 subunits. The complex is composed of a catalytic core of 3 subunits MT-CO1, MT-CO2 and MT-CO3, encoded in the mitochondrial DNA, and 11 supernumerary subunits COX4I1 (or COX4I2), COX5A, COX5B, COX6A1 (or COX6A2), COX6B1 (or COX6B2), COX6C, COX7A2 (or COX7A1), COX7B, COX7C, COX8A and NDUFA4, which are encoded in the nuclear genome. The complex exists as a monomer or a dimer and forms supercomplexes (SCs) in the inner mitochondrial membrane with NADH-ubiquinone oxidoreductase (complex I, CI) and ubiquinol-cytochrome c oxidoreductase (cytochrome b-c1 complex, complex III, CIII), resulting in different assemblies (supercomplex SCI(1)III(2)IV(1) and megacomplex MCI(2)III(2)IV(2)). Found in a complex with TMEM177, COA6, COX18, COX20, SCO1 and SCO2. Interacts with TMEM177 in a COX20-dependent manner. Interacts with COX20. Interacts with COX16. It depends on Cu cation as a cofactor.

The protein resides in the mitochondrion inner membrane. It carries out the reaction 4 Fe(II)-[cytochrome c] + O2 + 8 H(+)(in) = 4 Fe(III)-[cytochrome c] + 2 H2O + 4 H(+)(out). Functionally, component of the cytochrome c oxidase, the last enzyme in the mitochondrial electron transport chain which drives oxidative phosphorylation. The respiratory chain contains 3 multisubunit complexes succinate dehydrogenase (complex II, CII), ubiquinol-cytochrome c oxidoreductase (cytochrome b-c1 complex, complex III, CIII) and cytochrome c oxidase (complex IV, CIV), that cooperate to transfer electrons derived from NADH and succinate to molecular oxygen, creating an electrochemical gradient over the inner membrane that drives transmembrane transport and the ATP synthase. Cytochrome c oxidase is the component of the respiratory chain that catalyzes the reduction of oxygen to water. Electrons originating from reduced cytochrome c in the intermembrane space (IMS) are transferred via the dinuclear copper A center (CU(A)) of subunit 2 and heme A of subunit 1 to the active site in subunit 1, a binuclear center (BNC) formed by heme A3 and copper B (CU(B)). The BNC reduces molecular oxygen to 2 water molecules using 4 electrons from cytochrome c in the IMS and 4 protons from the mitochondrial matrix. The protein is Cytochrome c oxidase subunit 2 (MT-CO2) of Homo sapiens (Human).